Reading from the N-terminus, the 288-residue chain is Polyamine aminopropyltransferase (288 aa).

The PABS domain occupies 9-242; sequence SGWLDEYHQG…GLWSWAFASM (234 aa). Q36 provides a ligand contact to S-methyl-5'-thioadenosine. Spermidine contacts are provided by H67 and D91. Residues E111 and 143–144 each bind S-methyl-5'-thioadenosine; that span reads NG. D162 (proton acceptor) is an active-site residue. P169 is a binding site for S-methyl-5'-thioadenosine.

It belongs to the spermidine/spermine synthase family. In terms of assembly, homodimer or homotetramer.

It is found in the cytoplasm. The enzyme catalyses S-adenosyl 3-(methylsulfanyl)propylamine + putrescine = S-methyl-5'-thioadenosine + spermidine + H(+). It functions in the pathway amine and polyamine biosynthesis; spermidine biosynthesis; spermidine from putrescine: step 1/1. In terms of biological role, catalyzes the irreversible transfer of a propylamine group from the amino donor S-adenosylmethioninamine (decarboxy-AdoMet) to putrescine (1,4-diaminobutane) to yield spermidine. This is Polyamine aminopropyltransferase from Prochlorococcus marinus (strain NATL1A).